The following is a 396-amino-acid chain: L-cysteine desulfidase (396 aa).

Residue C23 is the Proton acceptor of the active site. [4Fe-4S] cluster is bound by residues C287, C329, and C336.

Belongs to the L-cysteine desulfidase family. Homotrimer. It depends on [4Fe-4S] cluster as a cofactor.

It carries out the reaction L-cysteine + H2O = hydrogen sulfide + pyruvate + NH4(+) + H(+). In terms of biological role, catalyzes the cleavage of L-cysteine to form 2-aminoprop-2-enoate and sulfide. The former then spontaneously hydrolyzes to pyruvate and NH(3). May be responsible for the production of sulfide required for the biosynthesis of iron-sulfur centers in this archaea. The protein is L-cysteine desulfidase of Methanococcus maripaludis (strain DSM 14266 / JCM 13030 / NBRC 101832 / S2 / LL).